The following is a 209-amino-acid chain: Glutathione S-transferase (209 aa).

Residues phenylalanine 7–glycine 91 form the GST N-terminal domain. Residues glutamine 62 to valine 63, glutamine 75 to serine 76, aspartate 109, lysine 121, and threonine 125 each bind glutathione. Residues glycine 93–tyrosine 209 enclose the GST C-terminal domain.

Belongs to the GST superfamily. Homodimer. In the absence of ligands two homodimers may interact to form a tetramer.

The catalysed reaction is RX + glutathione = an S-substituted glutathione + a halide anion + H(+). Its function is as follows. Conjugation of reduced glutathione to a wide number of exogenous and endogenous hydrophobic electrophiles. May also function as a storage protein or ligandin for parasitotoxic ferriprotoporphyrin IX (hemin). This is Glutathione S-transferase from Plasmodium yoelii yoelii.